The following is a 491-amino-acid chain: Ketol-acid reductoisomerase (NADP(+)) (491 aa).

Residues 15–208 form the KARI N-terminal Rossmann domain; it reads AQLGKCRFMG…GGHRAGVLES (194 aa). Residues 45–48, Arg68, Arg76, Ser78, and 108–110 contribute to the NADP(+) site; these read CGAQ and DKQ. Residue His132 is part of the active site. Gly158 contributes to the NADP(+) binding site. 2 consecutive KARI C-terminal knotted domains span residues 209-344 and 345-484; these read SFVA…TAPQ and YEGK…MTDM. Asp217, Glu221, Glu389, and Glu393 together coordinate Mg(2+). Substrate is bound at residue Ser414.

The protein belongs to the ketol-acid reductoisomerase family. Mg(2+) serves as cofactor.

The catalysed reaction is (2R)-2,3-dihydroxy-3-methylbutanoate + NADP(+) = (2S)-2-acetolactate + NADPH + H(+). It carries out the reaction (2R,3R)-2,3-dihydroxy-3-methylpentanoate + NADP(+) = (S)-2-ethyl-2-hydroxy-3-oxobutanoate + NADPH + H(+). It functions in the pathway amino-acid biosynthesis; L-isoleucine biosynthesis; L-isoleucine from 2-oxobutanoate: step 2/4. Its pathway is amino-acid biosynthesis; L-valine biosynthesis; L-valine from pyruvate: step 2/4. In terms of biological role, involved in the biosynthesis of branched-chain amino acids (BCAA). Catalyzes an alkyl-migration followed by a ketol-acid reduction of (S)-2-acetolactate (S2AL) to yield (R)-2,3-dihydroxy-isovalerate. In the isomerase reaction, S2AL is rearranged via a Mg-dependent methyl migration to produce 3-hydroxy-3-methyl-2-ketobutyrate (HMKB). In the reductase reaction, this 2-ketoacid undergoes a metal-dependent reduction by NADPH to yield (R)-2,3-dihydroxy-isovalerate. This Shigella flexneri protein is Ketol-acid reductoisomerase (NADP(+)).